A 1938-amino-acid chain; its full sequence is Histone-lysine N-methyltransferase SETD1B (1938 aa).

The span at 1–20 shows a compositional bias: basic and acidic residues; the sequence is MSFKEAKPGERGKNPEDHGR. The interval 1–44 is disordered; that stretch reads MSFKEAKPGERGKNPEDHGRKQAASWMNGMEAANQPSTSAEKKS. Residues 111 to 199 form the RRM domain; the sequence is DEFYVGPVPP…NIIHAELDTK (89 aa). Disordered stretches follow at residues 226–357, 369–484, 496–630, 652–688, 916–1125, 1147–1174, 1187–1206, 1327–1373, 1413–1468, 1496–1528, and 1744–1772; these read LDAS…ENTF, FPRT…TRIA, LISS…EVTP, GFPPLPPPPPPQSGFPMPPPLPPPPPPTHPSVTVPPP, KEPP…SSPV, HQTAQDTSHLRKKDLDVPLVESKEHKQD, MQQNVFKEHEKAPSPMNEEE, KTLS…GNSL, FPES…VPHM, ECEFTKGQLPSTDESAPSPPFPPTDKRKGPKKP, and DEPPIDTQGKSIPAQPQASTRAGSERRSE. Composition is skewed to polar residues over residues 254 to 290, 298 to 312, 375 to 407, and 446 to 457; these read VTPNSSTPFSHDTAYSSSRQGTPNSYSQFTPQSQGTP, PFSQDSSYSSRQTTP, LSHSSGNNKSAFSPYQGSTVFPQTDDNQYPQTS, and DSTTEQKASFAQ. Positions 512–531 are enriched in low complexity; that stretch reads SPISSSSSQLSPIPPYSSSS. 2 stretches are compositionally biased toward polar residues: residues 532 to 546 and 569 to 585; these read HYQDVTPSSRPSSTG and SLCQNSRSASPIDQINQ. The segment covering 588-599 has biased composition (basic and acidic residues); the sequence is RKMETLDNKELV. Acidic residues predominate over residues 619–628; that stretch reads EDMEISDDEV. Acidic residues-rich tracts occupy residues 976 to 990 and 1054 to 1114; these read SEGEEEVESEGDDGE and DSSD…EDFF. A compositionally biased stretch (basic and acidic residues) spans 1159-1174; sequence KDLDVPLVESKEHKQD. Positions 1329–1343 are enriched in basic and acidic residues; that stretch reads LSEEELPRTPGRDIL. Polar residues-rich tracts occupy residues 1349 to 1358 and 1441 to 1453; these read LGKSQSTETI and EPTSASLTMNSVP. A compositionally biased stretch (pro residues) spans 1454–1464; that stretch reads SPIPFASPPRG. A compositionally biased stretch (polar residues) spans 1751–1765; sequence QGKSIPAQPQASTRA. Positions 1770 to 1775 match the RxxxRR motif motif; that stretch reads RSEQRR. One can recognise an SET domain in the interval 1799–1916; the sequence is KKIRFCKSHI…VNEEITYDYK (118 aa). An S-adenosyl-L-methionine-binding site is contributed by Y1915. Residues 1922–1938 form the Post-SET domain; it reads VKIPCLCGAENCRGTLN.

This sequence belongs to the class V-like SAM-binding methyltransferase superfamily. As to quaternary structure, component of the SET1B/COMPASS complex.

The protein localises to the nucleus speckle. It is found in the chromosome. The catalysed reaction is L-lysyl(4)-[histone H3] + 3 S-adenosyl-L-methionine = N(6),N(6),N(6)-trimethyl-L-lysyl(4)-[histone H3] + 3 S-adenosyl-L-homocysteine + 3 H(+). Histone methyltransferase that specifically methylates 'Lys-4' of histone H3, when part of the SET1 histone methyltransferase (HMT) complex, but not if the neighboring 'Lys-9' residue is already methylated. H3 'Lys-4' methylation represents a specific tag for epigenetic transcriptional activation. This chain is Histone-lysine N-methyltransferase SETD1B (setd1b), found in Xenopus laevis (African clawed frog).